A 446-amino-acid polypeptide reads, in one-letter code: MQKKIYIKTFGCQMNEYDSDKMADVLNASDGLIKTDKAEDADVILLNTCSVREKAQEKVFSDLGRLRELKLLKPDLMIGVGGCVASQEGDAIIKRAPYVDLVFGPQTLHRLPEMLKQRRSTGRSQVDISFPEIEKFDHMPPAKVEGATAFVSIMEGCSKYCSYCVVPYTRGEEVSRRFDDVLTEVAGLEAQGVKEITLLGQNVNAYRGEMADGEIADFALLIEYIAEMEGIERIRYVTSHPKEFTQRLIDTYAKVPKLVDHLYLPAQHGSDRILAAMKRGYTSLEYKSILRRLRAVRPNISISSDFIVGFPGETDEDFEAMMKLIDDIGYDNSFSFIFSPRPGTPAANLADDTPHEVKLKRLQRLQAVIDQNTRRYSDEMVGSVQRILVEGPSKKDADELQGRTENNRVVNFSAGPNAAHLIGQMVNVNITQSHAYTLRGEIVVKQ.

One can recognise an MTTase N-terminal domain in the interval 3 to 120 (KKIYIKTFGC…LPEMLKQRRS (118 aa)). 6 residues coordinate [4Fe-4S] cluster: cysteine 12, cysteine 49, cysteine 83, cysteine 157, cysteine 161, and cysteine 164. The Radical SAM core domain occupies 143-375 (KVEGATAFVS…QAVIDQNTRR (233 aa)). The TRAM domain maps to 378–444 (DEMVGSVQRI…AYTLRGEIVV (67 aa)).

The protein belongs to the methylthiotransferase family. MiaB subfamily. Monomer. It depends on [4Fe-4S] cluster as a cofactor.

The protein resides in the cytoplasm. It carries out the reaction N(6)-dimethylallyladenosine(37) in tRNA + (sulfur carrier)-SH + AH2 + 2 S-adenosyl-L-methionine = 2-methylsulfanyl-N(6)-dimethylallyladenosine(37) in tRNA + (sulfur carrier)-H + 5'-deoxyadenosine + L-methionine + A + S-adenosyl-L-homocysteine + 2 H(+). Its function is as follows. Catalyzes the methylthiolation of N6-(dimethylallyl)adenosine (i(6)A), leading to the formation of 2-methylthio-N6-(dimethylallyl)adenosine (ms(2)i(6)A) at position 37 in tRNAs that read codons beginning with uridine. This is tRNA-2-methylthio-N(6)-dimethylallyladenosine synthase from Herminiimonas arsenicoxydans.